A 325-amino-acid chain; its full sequence is MLPSLRKGCFIVNSIRLKLPRFYSLNAQPLGTDNTIENNTPTETNRLSKTSQKFWEKVSLNRDVEKGKIALQLDGRTIKTPLGNGIIVDNAKSLLAYLLKLEWSSLSSLSIKTHSLPLTSLVARCIDLQMTNEPGCDPQLVAKIGGNSDVIKNQLLRYLDTDTLLVFSPMNEFEGRLRNAQNELYIPIIKGMEEFLRNFSSESNIRLQILDADIHGLRGNQQSDIVKNAAKKYMSSLSPWDLAILEKTVLTTKSFICGVLLLENKKDTANLIPALKTDMDNIVRAATLETIFQVEKWGEVEDTHDVDKRDIRRKIHTAAIAAFKQ.

The transit peptide at 1-32 directs the protein to the mitochondrion; the sequence is MLPSLRKGCFIVNSIRLKLPRFYSLNAQPLGT.

The protein belongs to the ATP12 family. Exists either as a homo- or heterooligomer.

Its subcellular location is the mitochondrion. The protein resides in the mitochondrion intermembrane space. In terms of biological role, essential for the assembly of the mitochondrial F1-F0 complex. This Saccharomyces cerevisiae (strain ATCC 204508 / S288c) (Baker's yeast) protein is Protein ATP12, mitochondrial (ATP12).